A 137-amino-acid polypeptide reads, in one-letter code: 2-iminobutanoate/2-iminopropanoate deaminase (137 aa).

S2 carries the N-acetylserine modification. Residues K13, K60, and K67 each carry the N6-succinyllysine modification. Residue T74 is modified to Phosphothreonine. Phosphoserine is present on S136.

The protein belongs to the RutC family. Homotrimer. Interacts with YTHDF2. As to expression, expressed predominantly in liver and kidney. Lower levels in lung and brain.

The protein localises to the cytoplasm. Its subcellular location is the nucleus. It localises to the peroxisome. The protein resides in the mitochondrion. It carries out the reaction 2-iminobutanoate + H2O = 2-oxobutanoate + NH4(+). The catalysed reaction is 2-iminopropanoate + H2O = pyruvate + NH4(+). Catalyzes the hydrolytic deamination of enamine/imine intermediates that form during the course of normal metabolism. May facilitate the release of ammonia from these potentially toxic reactive metabolites, reducing their impact on cellular components. It may act on enamine/imine intermediates formed by several types of pyridoxal-5'-phosphate-dependent dehydratases including L-threonine dehydratase. Functionally, also promotes endoribonucleolytic cleavage of some transcripts by promoting recruitment of the ribonuclease P/MRP complex. Acts by bridging YTHDF2 and the ribonuclease P/MRP complex. RIDA/HRSP12 binds to N6-methyladenosine (m6A)-containing mRNAs containing a 5'-GGUUC-3' motif: cooperative binding of RIDA/HRSP12 and YTHDF2 to such transcripts lead to recruitment of the ribonuclease P/MRP complex and subsequent endoribonucleolytic cleavage. The protein is 2-iminobutanoate/2-iminopropanoate deaminase of Homo sapiens (Human).